The sequence spans 219 residues: Ribose-5-phosphate isomerase A (219 aa).

Residues 28 to 31, 81 to 84, and 94 to 97 contribute to the substrate site; these read SGST, DGAD, and KGGG. Glutamate 103 functions as the Proton acceptor in the catalytic mechanism. Residue lysine 121 coordinates substrate.

Belongs to the ribose 5-phosphate isomerase family. Homodimer.

The catalysed reaction is aldehydo-D-ribose 5-phosphate = D-ribulose 5-phosphate. The protein operates within carbohydrate degradation; pentose phosphate pathway; D-ribose 5-phosphate from D-ribulose 5-phosphate (non-oxidative stage): step 1/1. Functionally, catalyzes the reversible conversion of ribose-5-phosphate to ribulose 5-phosphate. In Haemophilus influenzae (strain PittEE), this protein is Ribose-5-phosphate isomerase A.